The chain runs to 555 residues: 2-isopropylmalate synthase (555 aa).

In terms of domain architecture, Pyruvate carboxyltransferase spans 30 to 303; sequence PIWCSVDLRD…DPGLDCTDIN (274 aa). Asp-39, His-242, His-244, and Asn-278 together coordinate Mg(2+). The interval 437 to 555 is regulatory domain; that stretch reads QPDARIKFVD…VSAANRVIAK (119 aa).

The protein belongs to the alpha-IPM synthase/homocitrate synthase family. LeuA type 2 subfamily. In terms of assembly, homodimer. Mg(2+) serves as cofactor.

The protein resides in the cytoplasm. It catalyses the reaction 3-methyl-2-oxobutanoate + acetyl-CoA + H2O = (2S)-2-isopropylmalate + CoA + H(+). It functions in the pathway amino-acid biosynthesis; L-leucine biosynthesis; L-leucine from 3-methyl-2-oxobutanoate: step 1/4. Its function is as follows. Catalyzes the condensation of the acetyl group of acetyl-CoA with 3-methyl-2-oxobutanoate (2-ketoisovalerate) to form 3-carboxy-3-hydroxy-4-methylpentanoate (2-isopropylmalate). This chain is 2-isopropylmalate synthase, found in Brucella melitensis biotype 1 (strain ATCC 23456 / CCUG 17765 / NCTC 10094 / 16M).